Reading from the N-terminus, the 75-residue chain is Venom serine protease inhibitor BiVSPI (75 aa).

An N-terminal signal peptide occupies residues 1–20; sequence MSRILFVFLAVMAIFSTSFG. 5 disulfides stabilise this stretch: Cys23–Cys55, Cys32–Cys51, Cys35–Cys47, Cys39–Cys75, and Cys57–Cys69. The 53-residue stretch at 23-75 folds into the TIL domain; the sequence is CGLNEEFKSCGSCEPTCAKPRVTICTMECKIGCQCKSGYLRNGEGTCVLPEKC.

The protein belongs to the serine protease inhibitor-like (TIL domain-containing) family. May be O-glycosylated. Expressed by the venom gland (at protein level) and expressed in fat body.

It is found in the secreted. It localises to the target cell membrane. Functionally, antimicrobial venom serine protease inhibitor. Exhibits inhibitory activity against chymotrypsin (IC(50)=19.56 nM, Ki=15.24 nM) and microbial serine proteases, such as subtilisin A (IC(50)=6.57 nM, Ki=6.83 nM) and proteinase K (IC(50)=7.11 nM, Ki=7.02 nM). Has not activity against trypsin, plasmin, tPA, thrombin, factor Xa or elastase. Binds and inhibits Gram-positive bacteria (B.subtilis (MIC=29.45 uM), B.thuringiensis (MIC=91.03 uM)) and the entomopathogenic fungus B.bassiana (MIC=30.09 uM) but not to E.coli. This chain is Venom serine protease inhibitor BiVSPI, found in Bombus ignitus (Bumblebee).